The following is a 247-amino-acid chain: UDP-N-acetyl-D-mannosaminuronic acid transferase (247 aa).

The protein belongs to the glycosyltransferase 26 family.

The catalysed reaction is UDP-N-acetyl-alpha-D-mannosaminouronate + N-acetyl-alpha-D-glucosaminyl-di-trans,octa-cis-undecaprenyl diphosphate = beta-D-ManNAcA-(1-&gt;4)-alpha-D-GlcNAc-di-trans,octa-cis-undecaprenyl diphosphate + UDP + H(+). It participates in bacterial outer membrane biogenesis; enterobacterial common antigen biosynthesis. Its function is as follows. Catalyzes the synthesis of Und-PP-GlcNAc-ManNAcA (Lipid II), the second lipid-linked intermediate involved in enterobacterial common antigen (ECA) synthesis. This is UDP-N-acetyl-D-mannosaminuronic acid transferase from Enterobacter sp. (strain 638).